The primary structure comprises 316 residues: tRNA uridine(34) hydroxylase (316 aa).

Positions 136–230 (ADENTVVVDK…YLEEVPREQS (95 aa)) constitute a Rhodanese domain. Residue Cys190 is the Cysteine persulfide intermediate of the active site.

It belongs to the TrhO family.

It carries out the reaction uridine(34) in tRNA + AH2 + O2 = 5-hydroxyuridine(34) in tRNA + A + H2O. Its function is as follows. Catalyzes oxygen-dependent 5-hydroxyuridine (ho5U) modification at position 34 in tRNAs. This is tRNA uridine(34) hydroxylase from Brucella abortus (strain 2308).